Consider the following 637-residue polypeptide: MGKIIGIDLGTTNSCVAVMQGKDPVVIANAEGYRTTPSMVAFTKSGERLVGHAAKRQAITNATNTIFSIKRFMGRTQDEVPEETKMVPYQIVSEGNQARVKIGDKTHSPQEISAMILQKMKETAEDFLGEKVTEAVITVPAYFNDAQRQATKDAGQIAGLEVKRIINEPTAAALAYGLDKKQSNEKVAVFDLGGGTFDISVLELGDGVFEVRSTDGDTHLGGDNFDQILIDFLADEFKKQEMIDLRKDPMALQRLKEAAEKAKIELSSSAATEVNLPFITATQDGPKHLVVNITRAKFEGLCASLFDRILEPCRRAVKNAKLDVKEIDEVVLVGGSTRIPKVQQLVKEFFGKEPNRSVNPDEVVAVGAAIQGGVLKGDVTDVLLLDVTPLSLGIETLGGVMTKLIEANTTIPTKKQETFSTAADNQTSVEIHILQGERPMSTDNKTLGRFHLDGIPPAPRGVPQIEVAFDIDANGILHVSAKDKATGKEQSVRIEASGKLSETEIEKMKKDASSHADEDKKKKEEVDTKNTADALIFSTEKQINEIGDKLPAENLSKIQAALDRLKEAHKTGNTATIKPAMDALTKEWNEAASKMYGTEAGAPGAAGAAGAAGQGQSASSGKDDEVKNADFEVVDDK.

Residue T196 is modified to Phosphothreonine; by autocatalysis. Disordered stretches follow at residues 484–528 and 598–637; these read KATG…EVDT and TEAG…VDDK. Over residues 501-528 the composition is skewed to basic and acidic residues; sequence SETEIEKMKKDASSHADEDKKKKEEVDT. Positions 600 to 620 are enriched in low complexity; the sequence is AGAPGAAGAAGAAGQGQSASS. Basic and acidic residues predominate over residues 621–637; the sequence is GKDDEVKNADFEVVDDK.

Belongs to the heat shock protein 70 family.

Functionally, acts as a chaperone. The polypeptide is Chaperone protein DnaK (Chloroherpeton thalassium (strain ATCC 35110 / GB-78)).